Here is a 273-residue protein sequence, read N- to C-terminus: tRNA pseudouridine synthase B (273 aa).

The Nucleophile role is filled by Asp38.

This sequence belongs to the pseudouridine synthase TruB family. Type 1 subfamily.

It carries out the reaction uridine(55) in tRNA = pseudouridine(55) in tRNA. Responsible for synthesis of pseudouridine from uracil-55 in the psi GC loop of transfer RNAs. This Sulfurimonas denitrificans (strain ATCC 33889 / DSM 1251) (Thiomicrospira denitrificans (strain ATCC 33889 / DSM 1251)) protein is tRNA pseudouridine synthase B.